A 285-amino-acid chain; its full sequence is Elongation factor Ts (285 aa).

The involved in Mg(2+) ion dislocation from EF-Tu stretch occupies residues 84 to 87; that stretch reads TDFV.

It belongs to the EF-Ts family.

It localises to the cytoplasm. In terms of biological role, associates with the EF-Tu.GDP complex and induces the exchange of GDP to GTP. It remains bound to the aminoacyl-tRNA.EF-Tu.GTP complex up to the GTP hydrolysis stage on the ribosome. This Bifidobacterium animalis subsp. lactis (strain AD011) protein is Elongation factor Ts.